We begin with the raw amino-acid sequence, 121 residues long: uncharacterized protein (121 aa).

The segment at 101-121 is disordered; the sequence is SIEPTATGSPETRDPDPSAYA. Residues 111 to 121 show a composition bias toward basic and acidic residues; that stretch reads ETRDPDPSAYA.

It is found in the mitochondrion. This is an uncharacterized protein from Arabidopsis thaliana (Mouse-ear cress).